Reading from the N-terminus, the 81-residue chain is Putative membrane protein insertion efficiency factor (81 aa).

It belongs to the UPF0161 family.

It localises to the cell inner membrane. In terms of biological role, could be involved in insertion of integral membrane proteins into the membrane. This is Putative membrane protein insertion efficiency factor from Pseudomonas savastanoi pv. phaseolicola (strain 1448A / Race 6) (Pseudomonas syringae pv. phaseolicola (strain 1448A / Race 6)).